A 153-amino-acid chain; its full sequence is Small ribosomal subunit protein bS16 (153 aa).

Positions Glu130–Ala153 are disordered. Acidic residues predominate over residues Ala140–Ala153.

Belongs to the bacterial ribosomal protein bS16 family.

The polypeptide is Small ribosomal subunit protein bS16 (Bifidobacterium longum subsp. infantis (strain ATCC 15697 / DSM 20088 / JCM 1222 / NCTC 11817 / S12)).